A 93-amino-acid polypeptide reads, in one-letter code: DNA/RNA-binding protein Alba (93 aa).

Lys-11 carries the N6-acetyllysine modification.

Belongs to the histone-like Alba family. Acetylated. Acetylation at Lys-11 decreases DNA-binding affinity.

It localises to the cytoplasm. Its subcellular location is the chromosome. Functionally, binds double-stranded DNA tightly but without sequence specificity. Involved in DNA compaction. This Pyrococcus horikoshii (strain ATCC 700860 / DSM 12428 / JCM 9974 / NBRC 100139 / OT-3) protein is DNA/RNA-binding protein Alba.